Consider the following 261-residue polypeptide: ATP synthase subunit a (261 aa).

6 helical membrane-spanning segments follow: residues 45-65 (ITNVTMWMAIAVLVIAAILVL), 107-127 (VMTLFLFVLCGNVLGLLPLSF), 133-153 (MAVTVPLALMVFVGVTALGFM), 162-182 (MFWVTSAPLAIRPVLAVIEVI), 209-229 (IAGFASIVVVSPVVVGAVTAI), and 232-252 (LELLVAVVQAYVFTILTCVYL).

It belongs to the ATPase A chain family. In terms of assembly, F-type ATPases have 2 components, CF(1) - the catalytic core - and CF(0) - the membrane proton channel. CF(1) has five subunits: alpha(3), beta(3), gamma(1), delta(1), epsilon(1). CF(0) has four main subunits: a, b, b' and c.

Its subcellular location is the cell inner membrane. Key component of the proton channel; it plays a direct role in the translocation of protons across the membrane. The sequence is that of ATP synthase subunit a from Cereibacter sphaeroides (strain ATCC 17029 / ATH 2.4.9) (Rhodobacter sphaeroides).